The primary structure comprises 384 residues: Probable protein phosphatase 2C 42 (384 aa).

Residues 58–358 (DFSMAVIQAN…DDITVIVVFL (301 aa)) form the PPM-type phosphatase domain. Mn(2+) is bound by residues Asp-89, Gly-90, Asp-290, and Asp-349.

This sequence belongs to the PP2C family. Mg(2+) is required as a cofactor. The cofactor is Mn(2+).

The enzyme catalyses O-phospho-L-seryl-[protein] + H2O = L-seryl-[protein] + phosphate. It carries out the reaction O-phospho-L-threonyl-[protein] + H2O = L-threonyl-[protein] + phosphate. Dephosphorylates and represses plasma membrane H(+)-ATPases (PM H(+)-ATPases, e.g. AHA1 and AHA2), thus influencing negatively plant growth and fitness. Promotes the apical hook maintenance of etiolated seedlings. This is Probable protein phosphatase 2C 42 from Arabidopsis thaliana (Mouse-ear cress).